Here is a 387-residue protein sequence, read N- to C-terminus: Diels-Alderase ORF3 (387 aa).

It belongs to the Diels-Alderase family.

Its pathway is secondary metabolite biosynthesis. Functionally, diels-Alderase; part of the gene cluster that mediates the biosynthesis of a tyrosine-derived cytochalasan acting as a fungal signal recognized by resistant rice plants and leads to avirulence in Pi33 resistant rice cultivars. The first step in the pathway is catalyzed by the hybrid PKS-NRPS ACE1, assisted by the enoyl reductase RAP1, that are responsible for fusion of the tyrosine precursor and the polyketide backbone. The polyketide synthase module (PKS) of ACE1 is responsible for the synthesis of the polyketide backbone and the downstream nonribosomal peptide synthetase (NRPS) amidates the carboxyl end of the polyketide with the tyrosine precursor. Because ACE1 lacks a designated enoylreductase (ER) domain, the required activity is provided the enoyl reductase RAP1. Reduction by the hydrolyase ORFZ, followed by dehydration and intra-molecular Diels-Alder cyclization by the Diels-Alderase ORF3 then yield the required isoindolone-fused macrocycle. A number of oxidative steps catalyzed by the tailoring enzymes identified within the cluster, including cytochrome P450 monooxygenases CYP1 to CYP4, the FAD-linked oxidoreductase OXR2 and the short-chain dehydrogenase/reductase OXR1, are further required to afford the final cytochalasans that confer avirulence and which have still to be identified. The monooxygenase CYP1 has been shown to be a site-selective C-18 hydroxylase whereas the function of CYP3 is the site-selective epoxidation of the C-6/C-7 olefin that is present in some intermediate compounds. Finally, SYN2 and RAP2 are not required for avirulence in Pi33 resistant rice cultivars. This chain is Diels-Alderase ORF3, found in Pyricularia oryzae (strain 70-15 / ATCC MYA-4617 / FGSC 8958) (Rice blast fungus).